A 93-amino-acid chain; its full sequence is Mitochondrial import inner membrane translocase subunit Tim10-A (93 aa).

Positions 32 to 57 match the Twin CX3C motif motif; it reads CHKKCVPPHYKEAELSKGESVCLDRC. Intrachain disulfides connect Cys-32/Cys-57 and Cys-36/Cys-53.

Belongs to the small Tim family. Heterohexamer; composed of 3 copies of TIMM9 and 3 copies of TIMM10/TIM10A, named soluble 70 kDa complex. The complex forms a 6-bladed alpha-propeller structure and associates with the TIMM22 component of the TIM22 complex. Interacts with multi-pass transmembrane proteins in transit.

It localises to the mitochondrion inner membrane. Functionally, mitochondrial intermembrane chaperone that participates in the import and insertion of multi-pass transmembrane proteins into the mitochondrial inner membrane. May also be required for the transfer of beta-barrel precursors from the TOM complex to the sorting and assembly machinery (SAM complex) of the outer membrane. Acts as a chaperone-like protein that protects the hydrophobic precursors from aggregation and guide them through the mitochondrial intermembrane space. The protein is Mitochondrial import inner membrane translocase subunit Tim10-A (timm10-a) of Xenopus laevis (African clawed frog).